The sequence spans 698 residues: Protein let-99 (698 aa).

The DEP domain maps to 23–107; it reads FRSNLSLKTN…SESRIYLFMK (85 aa). Disordered stretches follow at residues 115–188 and 653–672; these read PKPR…DDEI and ITRS…QASP. Positions 146–157 are enriched in basic residues; it reads RPPKARLPRRLS. The span at 178-188 shows a compositional bias: basic and acidic residues; sequence HGFDDHKDDEI.

It is found in the cytoplasm. The protein localises to the cell cortex. Its function is as follows. Required for the proper orientation of spindles after the establishment of polarity. May play a role in interactions between the astral microtubules and the cortical cytoskeleton. Required for asymmetric forces on nuclei and spindles. Acts downstream of the PAR signaling as an intermediate that transduces polarity information to the machinery that positions the mitotic spindle, possibly by regulating force generation. Regulates gpr-1/2 asymmetric cortical localization during the first embryonic cell divisions. Acts antagonistically to the gpr-1/2 signaling pathway. Regulates mes-1 expression and/or localization pattern during early embryogenesis. This is Protein let-99 (let-99) from Caenorhabditis elegans.